A 1096-amino-acid chain; its full sequence is Constitutive coactivator of PPAR-gamma-like protein 2 (1096 aa).

A compositionally biased stretch (low complexity) spans 35 to 59 (QQQHLHRQLPPTAALAPGAPRAARG). Disordered stretches follow at residues 35–113 (QQQH…PPQL), 508–579 (NYLP…DGEP), and 971–1096 (SRSS…RKED). Residue Arg58 is modified to Omega-N-methylarginine. The span at 82–95 (TRHHHPAHHFHHHG) shows a compositional bias: basic residues. Pro residues predominate over residues 101–113 (LHPPLPPPPPPQL). Positions 540-559 (HITEAFHHQPEWGNPNRDRG) are enriched in basic and acidic residues. Residue Arg977 is modified to Omega-N-methylarginine. Basic and acidic residues-rich tracts occupy residues 1041-1050 (IKEEKSDHRL) and 1076-1096 (NREK…RKED). A Glycyl lysine isopeptide (Lys-Gly) (interchain with G-Cter in SUMO2) cross-link involves residue Lys1042.

The protein belongs to the constitutive coactivator of PPAR-gamma family. As to expression, expressed at low levels in a number of tissues.

The protein is Constitutive coactivator of PPAR-gamma-like protein 2 (FAM120C) of Homo sapiens (Human).